Reading from the N-terminus, the 167-residue chain is Insertion element IS1 1 protein InsB (167 aa).

The protein belongs to the transposase 27 family.

Its function is as follows. Absolutely required for transposition of IS1. The polypeptide is Insertion element IS1 1 protein InsB (insB1) (Escherichia coli (strain K12)).